The sequence spans 239 residues: Transcriptional regulatory protein BtsR (239 aa).

One can recognise a Response regulatory domain in the interval 3-116; sequence KVLIVDDEPL…RLEKTLARLR (114 aa). The residue at position 54 (aspartate 54) is a 4-aspartylphosphate. Positions 137–239 constitute an HTH LytTR-type domain; the sequence is IPCTGHSRIY…LKSLKEAIGL (103 aa).

In terms of processing, phosphorylated by BtsS.

Functionally, member of the two-component regulatory system BtsS/BtsR. BtsR regulates expression of btsT by binding to its promoter region. The sequence is that of Transcriptional regulatory protein BtsR from Escherichia coli O6:H1 (strain CFT073 / ATCC 700928 / UPEC).